A 315-amino-acid polypeptide reads, in one-letter code: Methionyl-tRNA formyltransferase (315 aa).

113–116 contributes to the (6S)-5,6,7,8-tetrahydrofolate binding site; that stretch reads SLLP.

The protein belongs to the Fmt family.

The enzyme catalyses L-methionyl-tRNA(fMet) + (6R)-10-formyltetrahydrofolate = N-formyl-L-methionyl-tRNA(fMet) + (6S)-5,6,7,8-tetrahydrofolate + H(+). Attaches a formyl group to the free amino group of methionyl-tRNA(fMet). The formyl group appears to play a dual role in the initiator identity of N-formylmethionyl-tRNA by promoting its recognition by IF2 and preventing the misappropriation of this tRNA by the elongation apparatus. The protein is Methionyl-tRNA formyltransferase of Cronobacter sakazakii (strain ATCC BAA-894) (Enterobacter sakazakii).